The sequence spans 369 residues: GTPase Obg (369 aa).

An Obg domain is found at 1–159 (MKFVDEVTID…KNLKLELRVL (159 aa)). In terms of domain architecture, OBG-type G spans 160-334 (ADVGLLGMPN…LIHAIYSHVA (175 aa)). GTP is bound by residues 166-173 (GMPNAGKS), 191-195 (FTTLH), 213-216 (DIPG), 284-287 (NKLD), and 315-317 (SAL). S173 and T193 together coordinate Mg(2+). A disordered region spans residues 339–369 (QPEEVPDPRFTTNEDLSEAAPAPDRDDPRFR).

This sequence belongs to the TRAFAC class OBG-HflX-like GTPase superfamily. OBG GTPase family. In terms of assembly, monomer. The cofactor is Mg(2+).

The protein resides in the cytoplasm. An essential GTPase which binds GTP, GDP and possibly (p)ppGpp with moderate affinity, with high nucleotide exchange rates and a fairly low GTP hydrolysis rate. Plays a role in control of the cell cycle, stress response, ribosome biogenesis and in those bacteria that undergo differentiation, in morphogenesis control. In Leptothrix cholodnii (strain ATCC 51168 / LMG 8142 / SP-6) (Leptothrix discophora (strain SP-6)), this protein is GTPase Obg.